The chain runs to 290 residues: Ribosomal RNA small subunit methyltransferase A (290 aa).

6 residues coordinate S-adenosyl-L-methionine: asparagine 28, leucine 30, glycine 55, glutamate 76, aspartate 102, and asparagine 126.

The protein belongs to the class I-like SAM-binding methyltransferase superfamily. rRNA adenine N(6)-methyltransferase family. RsmA subfamily.

It is found in the cytoplasm. The enzyme catalyses adenosine(1518)/adenosine(1519) in 16S rRNA + 4 S-adenosyl-L-methionine = N(6)-dimethyladenosine(1518)/N(6)-dimethyladenosine(1519) in 16S rRNA + 4 S-adenosyl-L-homocysteine + 4 H(+). Its function is as follows. Specifically dimethylates two adjacent adenosines (A1518 and A1519) in the loop of a conserved hairpin near the 3'-end of 16S rRNA in the 30S particle. May play a critical role in biogenesis of 30S subunits. This is Ribosomal RNA small subunit methyltransferase A from Lachnoclostridium phytofermentans (strain ATCC 700394 / DSM 18823 / ISDg) (Clostridium phytofermentans).